The chain runs to 391 residues: Steroid side-chain-cleaving aldolase (391 aa).

The active-site Proton acceptor is the Tyr294. The active-site Proton donor is Tyr344.

It belongs to the thiolase-like superfamily. As to quaternary structure, homodimer. Interacts with the ChsH1/ChsH2 hydratase via the DUF35 C-terminal region of ChsH2 (ChsH2-DUF35).

It carries out the reaction 17-hydroxy-3-oxochol-4-en-22-oyl-CoA = androst-4-ene-3,17-dione + propanoyl-CoA. Its function is as follows. Probably involved in bile acid degradation. In vitro, when associated with the ChsH1/ChsH2 hydratase, catalyzes the retroaldol cleavage of 17-hydroxy-3-oxo-4-pregnene-20-carboxyl-CoA (17-HOPC-CoA), forming androst-4-ene-3,17-dione and propionyl-CoA. The in vivo substrate is probably a closely analogous bile acid degradation metabolite. This is Steroid side-chain-cleaving aldolase from Thermomonospora curvata (strain ATCC 19995 / DSM 43183 / JCM 3096 / KCTC 9072 / NBRC 15933 / NCIMB 10081 / Henssen B9).